Consider the following 444-residue polypeptide: Homogentisate 1,2-dioxygenase (444 aa).

The active-site Proton acceptor is His-298. Fe cation is bound by residues His-341 and Glu-347. Homogentisate is bound by residues Tyr-356 and His-377. His-377 serves as a coordination point for Fe cation.

It belongs to the homogentisate dioxygenase family. In terms of assembly, hexamer; dimer of trimers. Fe cation serves as cofactor.

The catalysed reaction is homogentisate + O2 = 4-maleylacetoacetate + H(+). Its pathway is amino-acid degradation; L-phenylalanine degradation; acetoacetate and fumarate from L-phenylalanine: step 4/6. Functionally, involved in the catabolism of homogentisate (2,5-dihydroxyphenylacetate or 2,5-OH-PhAc), a central intermediate in the degradation of phenylalanine and tyrosine. Catalyzes the oxidative ring cleavage of the aromatic ring of homogentisate to yield maleylacetoacetate. The chain is Homogentisate 1,2-dioxygenase from Burkholderia lata (strain ATCC 17760 / DSM 23089 / LMG 22485 / NCIMB 9086 / R18194 / 383).